The sequence spans 115 residues: Large ribosomal subunit protein uL24 (115 aa).

Belongs to the universal ribosomal protein uL24 family. As to quaternary structure, part of the 50S ribosomal subunit.

Its function is as follows. One of two assembly initiator proteins, it binds directly to the 5'-end of the 23S rRNA, where it nucleates assembly of the 50S subunit. One of the proteins that surrounds the polypeptide exit tunnel on the outside of the subunit. The polypeptide is Large ribosomal subunit protein uL24 (Amoebophilus asiaticus (strain 5a2)).